The sequence spans 448 residues: Tapasin (448 aa).

The signal sequence occupies residues 1–20 (MKSLSLLLAVALGLATAVSA). Residues 21-414 (GPAVIECWFV…LSGPSLEDSI (394 aa)) are Lumenal-facing. A disulfide bridge links cysteine 27 with cysteine 91. N-linked (GlcNAc...) asparagine glycosylation is present at asparagine 253. The region spanning 292 to 399 (PKVSLMPATL…PASGRSAEVT (108 aa)) is the Ig-like C1-type domain. The cysteines at positions 315 and 382 are disulfide-linked. The helical transmembrane segment at 415–435 (GLFLSAFFLLGLFKALGWAAV) threads the bilayer. Residues 436 to 448 (YLSTCKDSKKKAE) lie on the Cytoplasmic side of the membrane.

Heterodimer with PDIA3; disulfide-linked. Obligatory mediator for the interaction between newly assembled MHC class I molecules, calreticulin, PDIA3 and TAP. Up to 4 MHC class I/tapasin complexes bind to 1 TAP. Interacts with HLA-G-B2M complex; this interaction is required for loading of high affinity peptides. On its own or as part of MHC class I peptide loading complex, interacts with ligand-free MR1 or MR1-B2M complex, providing for stable MR1 pools ready for metabolite antigen processing.

It is found in the endoplasmic reticulum membrane. Involved in the association of MHC class I with transporter associated with antigen processing (TAP) and in the assembly of MHC class I with peptide (peptide loading). This is Tapasin (TAPBP) from Chlorocebus aethiops (Green monkey).